The following is a 438-amino-acid chain: Ammonium transporter Rh type A (438 aa).

At 1–4 the chain is on the cytoplasmic side; the sequence is MRFK. The helical transmembrane segment at 5 to 25 threads the bilayer; that stretch reads FPLMAISLEVAMIVLFGLFVE. Over 26–61 the chain is Extracellular; that stretch reads YETPQNASQKNASHQNASQQGNTSSSAKKDQFFQLY. 4 N-linked (GlcNAc...) asparagine glycosylation sites follow: Asn-31, Asn-36, Asn-41, and Asn-47. A helical transmembrane segment spans residues 62 to 82; that stretch reads PLFQDVHVMIFVGFGFLMTFL. The Cytoplasmic segment spans residues 83–86; it reads KKYG. The chain crosses the membrane as a helical span at residues 87 to 107; sequence FSGVGFNLFLAALGLQWGTIM. Residues 108 to 121 lie on the Extracellular side of the membrane; it reads QGLLHSHGKEFHFG. Residues 122–142 form a helical membrane-spanning segment; the sequence is IYNMINADFSTATVLISFGAV. Residues 143 to 148 are Cytoplasmic-facing; sequence LGKTSP. A helical membrane pass occupies residues 149–169; the sequence is IQMLIMTILEIAVFAGNEYLV. Topologically, residues 170–178 are extracellular; sequence TELFEASDT. A helical membrane pass occupies residues 179-199; it reads GASMTIHAFGAYFGLAVAGVL. The Cytoplasmic portion of the chain corresponds to 200 to 218; sequence YRPGLRCEHPNDESVYHSD. The chain crosses the membrane as a helical span at residues 219 to 239; the sequence is LFAMIGTLFLWIFWPSFNSAI. The Extracellular segment spans residues 240–249; sequence ADPGDHQYRA. The chain crosses the membrane as a helical span at residues 250–270; it reads IVNTYMSLAACVITAYALSSL. The Cytoplasmic segment spans residues 271–278; the sequence is VERRGRLD. Residues 279 to 296 form a helical membrane-spanning segment; it reads MVHIQNATLAGGVAVGTC. The Extracellular portion of the chain corresponds to 297 to 300; sequence ADME. A helical membrane pass occupies residues 301–321; the sequence is IPLYAAMTIGSIAGIISVLGY. Topologically, residues 322–342 are cytoplasmic; it reads KFFSPLLANKLMIHDTCGVHN. The chain crosses the membrane as a helical span at residues 343 to 363; that stretch reads LHGLPGVFGGLASIVAISWGM. Topologically, residues 364–372 are extracellular; that stretch reads STASMAMQA. Residues 373–393 form a helical membrane-spanning segment; that stretch reads AALGSSIGSAIVGGLLTGLIL. At 394–438 the chain is on the cytoplasmic side; it reads KLPIWNQPPDEYCYDDSVSWKVPKFRELDNRFFQHANHNHVEHEV.

It belongs to the ammonium transporter (TC 2.A.49) family. Rh subfamily. Homodimer. Heterotrimer; a RHCE monomer interacts with a RHAG homodimer. Component of the ankyrin-1 complex in the erythrocyte, composed of ANK1, RHCE, RHAG, SLC4A1, EPB42, GYPA, GYPB and AQP1. Interacts with GYPB (via the N-terminal); this interaction bridges the (RHAG)2(RHCE) heterotrimer with the SLC4A1 Band 3 I dimer complexed with GYPA. Post-translationally, glycosylated.

It is found in the membrane. The enzyme catalyses methylamine(out) = methylamine(in). The catalysed reaction is NH4(+)(in) = NH4(+)(out). It carries out the reaction CO2(out) = CO2(in). Its function is as follows. Component of the ankyrin-1 complex, a multiprotein complex involved in the stability and shape of the erythrocyte membrane. Heterotrimer with RHCE (RHAG)2(RHCE), that transports ammonium and its related derivative methylammonium, in both neutral and ionic forms, across the erythrocyte membrane. The transport of NH4(+) is electrogenic and masks the NH3 transport. Also, may act as a CO2 channel. Moreover in erythrocyte, regulates RHD membrane expression and is associated with rhesus blood group antigen expression. The polypeptide is Ammonium transporter Rh type A (Mus musculus (Mouse)).